Consider the following 548-residue polypeptide: Glucose-6-phosphate isomerase (548 aa).

E355 (proton donor) is an active-site residue. Residues H386 and K514 contribute to the active site.

It belongs to the GPI family.

It is found in the cytoplasm. The catalysed reaction is alpha-D-glucose 6-phosphate = beta-D-fructose 6-phosphate. The protein operates within carbohydrate biosynthesis; gluconeogenesis. Its pathway is carbohydrate degradation; glycolysis; D-glyceraldehyde 3-phosphate and glycerone phosphate from D-glucose: step 2/4. Functionally, catalyzes the reversible isomerization of glucose-6-phosphate to fructose-6-phosphate. The chain is Glucose-6-phosphate isomerase from Proteus mirabilis (strain HI4320).